A 1377-amino-acid chain; its full sequence is DNA-directed RNA polymerase subunit beta' (1377 aa).

The Zn(2+) site is built by cysteine 60, cysteine 62, cysteine 75, and cysteine 78. Mg(2+)-binding residues include aspartate 449, aspartate 451, and aspartate 453. Residues cysteine 777, cysteine 851, cysteine 858, and cysteine 861 each contribute to the Zn(2+) site.

This sequence belongs to the RNA polymerase beta' chain family. In terms of assembly, the RNAP catalytic core consists of 2 alpha, 1 beta, 1 beta' and 1 omega subunit. When a sigma factor is associated with the core the holoenzyme is formed, which can initiate transcription. Mg(2+) is required as a cofactor. Zn(2+) serves as cofactor.

It catalyses the reaction RNA(n) + a ribonucleoside 5'-triphosphate = RNA(n+1) + diphosphate. In terms of biological role, DNA-dependent RNA polymerase catalyzes the transcription of DNA into RNA using the four ribonucleoside triphosphates as substrates. The chain is DNA-directed RNA polymerase subunit beta' from Borreliella burgdorferi (strain ATCC 35210 / DSM 4680 / CIP 102532 / B31) (Borrelia burgdorferi).